A 384-amino-acid polypeptide reads, in one-letter code: DNA dC-&gt;dU-editing enzyme APOBEC-3G (384 aa).

The essential for cytoplasmic localization stretch occupies residues 1–60; that stretch reads MKPHFRNPVERMYQDTFSDNFYNRPILSHRNTVWLCYEVKTKGPSRPPLDAKIFRGQVYS. CMP/dCMP-type deaminase domains follow at residues 29 to 138 and 214 to 328; these read HRNT…LRSL and GRHE…LRTL. Thr-32 carries the phosphothreonine; by PKA modification. Positions 65, 97, and 100 each coordinate Zn(2+). The segment at 209–336 is necessary for homooligomerization; that stretch reads ELWVRGRHET…TLAKAGAKIS (128 aa). The interval 213 to 215 is interaction with DNA; that stretch reads RGR. Thr-218 carries the post-translational modification Phosphothreonine; by PKA and CAMK2. His-257 provides a ligand contact to Zn(2+). The active-site Proton donor is the Glu-259. Zn(2+)-binding residues include Cys-288 and Cys-291. The tract at residues 313-320 is interaction with DNA; the sequence is RIYDDQGR.

The protein belongs to the cytidine and deoxycytidylate deaminase family. As to quaternary structure, homodimer. Homooligomer. Can bind RNA to form ribonucleoprotein complexes of high-molecular-mass (HMM) or low-molecular-mass (LMM). HMM is inactive and heterogeneous in protein composition because of binding nonselectively to cellular RNAs, which in turn are associated with variety of cellular proteins. The LMM form which is enzymatically active has few or no RNAs associated. Its ability to form homooligomer is distinct from its ability to assemble into HMM. Interacts with APOBEC3B, APOBEC3F, MOV10, AGO2, EIF4E, EIF4ENIF1, DCP2 and DDX6 in an RNA-dependent manner. Interacts with AGO1, AGO3 and PKA/PRKACA. It depends on Zn(2+) as a cofactor.

The protein localises to the cytoplasm. Its subcellular location is the nucleus. It is found in the P-body. It catalyses the reaction a 2'-deoxycytidine in single-stranded DNA + H2O + H(+) = a 2'-deoxyuridine in single-stranded DNA + NH4(+). In terms of biological role, DNA deaminase (cytidine deaminase) which acts as an inhibitor of retrovirus replication and retrotransposon mobility via deaminase-dependent and -independent mechanisms. Exhibits antiviral activity against vif-deficient: HIV-1 and simian immunodeficiency viruses (SIVs) and also against simian foamy virus (SFV). After the penetration of retroviral nucleocapsids into target cells of infection and the initiation of reverse transcription, it can induce the conversion of cytosine to uracil in the minus-sense single-strand viral DNA, leading to G-to-A hypermutations in the subsequent plus-strand viral DNA. The resultant detrimental levels of mutations in the proviral genome, along with a deamination-independent mechanism that works prior to the proviral integration, together exert efficient antiretroviral effects in infected target cells. Selectively targets single-stranded DNA and does not deaminate double-stranded DNA or single- or double-stranded RNA. May inhibit the mobility of LTR retrotransposons. The sequence is that of DNA dC-&gt;dU-editing enzyme APOBEC-3G (APOBEC3G) from Pan troglodytes (Chimpanzee).